The primary structure comprises 91 residues: Small integral membrane protein 13 (91 aa).

Residues 10–30 traverse the membrane as a helical segment; sequence LVFVATLLIVLLLMVCGWYFV. The segment at 47–91 is disordered; the sequence is DTGSQEGDHEPSGSETEEDTSSSPHRIRSARQRRAPADEGHRPLT. Ser58 and Ser60 each carry phosphoserine. Position 62 is a phosphothreonine (Thr62). Ser69 bears the Phosphoserine mark. A compositionally biased stretch (basic residues) spans 71 to 80; the sequence is HRIRSARQRR. A compositionally biased stretch (basic and acidic residues) spans 81–91; that stretch reads APADEGHRPLT.

It belongs to the SMIM13 family.

It localises to the membrane. This chain is Small integral membrane protein 13 (SMIM13), found in Homo sapiens (Human).